We begin with the raw amino-acid sequence, 464 residues long: Soluble pyridine nucleotide transhydrogenase (464 aa).

Asp35–Cys44 lines the FAD pocket.

It belongs to the class-I pyridine nucleotide-disulfide oxidoreductase family. Requires FAD as cofactor.

It is found in the cytoplasm. The catalysed reaction is NAD(+) + NADPH = NADH + NADP(+). Conversion of NADPH, generated by peripheral catabolic pathways, to NADH, which can enter the respiratory chain for energy generation. In Pseudomonas savastanoi pv. phaseolicola (strain 1448A / Race 6) (Pseudomonas syringae pv. phaseolicola (strain 1448A / Race 6)), this protein is Soluble pyridine nucleotide transhydrogenase.